The primary structure comprises 305 residues: Nitrogen assimilation regulatory protein nac (305 aa).

In terms of domain architecture, HTH lysR-type spans 1-58 (MNLRRLKYFVKIVDIGSLTQAAEVLHIAQPALSQQVATLEGEMDQQLLIRTKRGVTPT). The H-T-H motif DNA-binding region spans 18–37 (LTQAAEVLHIAQPALSQQVA).

The protein belongs to the LysR transcriptional regulatory family.

Transcriptional activator for the hut, put and ure operons and repressor for the gdh and gltB operons in response to nitrogen limitation. Negative regulator of its own expression. The chain is Nitrogen assimilation regulatory protein nac (nac) from Klebsiella aerogenes (Enterobacter aerogenes).